The primary structure comprises 347 residues: Nuclear distribution protein nudE-like 1 (347 aa).

Residues 28 to 190 (QSFQEARDEL…LAVRERQQEV (163 aa)) are a coiled coil. Positions 56-166 (VQAEQRNRDL…LDEKESLLVS (111 aa)) are self-association. The interaction with KATNB1 stretch occupies residues 64–189 (DLQADNQRLK…ELAVRERQQE (126 aa)). The interval 114–133 (YVRELEQANDDLERAKRATI) is required for interaction with PAFAH1B1. An interaction with CENPF region spans residues 175-347 (RDLRQELAVR…SAPGMLPLSV (173 aa)). Positions 189–256 (EVTRKSAPSS…SARISALNIV (68 aa)) are interaction with YWHAE. An interaction with NEFL region spans residues 191-347 (TRKSAPSSPT…SAPGMLPLSV (157 aa)). An interaction with KATNA1 region spans residues 195-256 (APSSPTLDCE…SARISALNIV (62 aa)). S215 carries the phosphoserine modification. T219 carries the post-translational modification Phosphothreonine; by CDK1 and MAPK1. S231 is modified (phosphoserine). An interaction with DISC1 region spans residues 241 to 280 (TSPLTPSARISALNIVGDLLRKVGALESKLAACRNFAKDQ). A Phosphoserine; by CDK1 modification is found at S242. T245 is subject to Phosphothreonine; by CDK1 and MAPK1. The tract at residues 256-291 (VGDLLRKVGALESKLAACRNFAKDQASRKSYISGNV) is required for localization to the centrosome and interaction with dynein, dynactin, tubulin gamma, PCM1 and PCNT. The S-palmitoyl cysteine; by ZDHHC2, ZDHHC3 and ZDHHC7 moiety is linked to residue C273. The interval 314-347 (KGAVNGFDPAPPPPDPGLGSSRPSSAPGMLPLSV) is disordered. S346 is modified (phosphoserine).

This sequence belongs to the nudE family. As to quaternary structure, self-associates. Interacts with DISC1, dynein, dynactin, tubulin gamma, KATNA1, KATNB1, microtubules, PAFAH1B1, PCM1, PCNT, and YWHAE. Interacts directly with NEFL and indirectly with NEFH. Interacts (via C-terminus) with CENPF. Interacts with ZNF365. Interacts with PLEKHM1 (via N- and C-terminus). Interacts with GTP-bound RAB9A; the interaction may lead to RAB9A-dynein motor tethering. In terms of processing, phosphorylated in mitosis. Can be phosphorylated by CDK1, CDK5 and MAPK1. Phosphorylation by CDK5 promotes interaction with KATNA1 and YWHAE. Post-translationally, palmitoylation at Cys-273 reduces affinity for dynein.

It localises to the cytoplasm. It is found in the cytoskeleton. The protein resides in the microtubule organizing center. Its subcellular location is the centrosome. The protein localises to the chromosome. It localises to the centromere. It is found in the kinetochore. The protein resides in the spindle. Functionally, required for organization of the cellular microtubule array and microtubule anchoring at the centrosome. May regulate microtubule organization at least in part by targeting the microtubule severing protein KATNA1 to the centrosome. Also positively regulates the activity of the minus-end directed microtubule motor protein dynein. May enhance dynein-mediated microtubule sliding by targeting dynein to the microtubule plus ends. Required for several dynein- and microtubule-dependent processes such as the maintenance of Golgi integrity, the centripetal motion of secretory vesicles and the coupling of the nucleus and centrosome. Also required during brain development for the migration of newly formed neurons from the ventricular/subventricular zone toward the cortical plate. Required for mitosis in some cell types but appears to be dispensible for mitosis in cortical neuronal progenitors, which instead requires NDE1. Facilitates the polymerization of neurofilaments from the individual subunits NEFH and NEFL. Positively regulates lysosome peripheral distribution and ruffled border formation in osteoclasts. Plays a role, together with DISC1, in the regulation of neurite outgrowth. May act as a RAB9A/B effector that tethers RAB9-associated late endosomes to the dynein motor for their retrograde transport to the trans-Golgi network. This chain is Nuclear distribution protein nudE-like 1 (NDEL1), found in Macaca fascicularis (Crab-eating macaque).